The primary structure comprises 198 residues: Peroxiredoxin-2F, mitochondrial (198 aa).

Residues 1–27 (MASALLRKATVGGSAAAAAARWASRGL) constitute a mitochondrion transit peptide. The 165-residue stretch at 34–198 (SDIVSAAPGV…SGAEVILDQI (165 aa)) folds into the Thioredoxin domain. Catalysis depends on Cys86, which acts as the Cysteine sulfenic acid (-SOH) intermediate.

It belongs to the peroxiredoxin family. Prx5 subfamily. As to quaternary structure, monomer.

It is found in the mitochondrion matrix. The enzyme catalyses [glutaredoxin]-dithiol + a hydroperoxide = [glutaredoxin]-disulfide + an alcohol + H2O. In terms of biological role, thiol-specific peroxidase that catalyzes the reduction of hydrogen peroxide and organic hydroperoxides to water and alcohols, respectively. Plays a role in cell protection against oxidative stress by detoxifying peroxides. Reduces preferentially hydrogen peroxide rather than alkyl peroxides. May be involved in mitochondrial redox homeostasis. The polypeptide is Peroxiredoxin-2F, mitochondrial (PRXIIF) (Oryza sativa subsp. japonica (Rice)).